A 395-amino-acid chain; its full sequence is Glyceraldehyde-3-phosphate dehydrogenase, testis-specific (395 aa).

The testis-specific N-terminal extension stretch occupies residues 1-60; it reads MSKRDIVLTNVTVVQLLRQPCPEPRVEAEPEPPAQPQPQPEPIKEEVPPPPPPPPAPKKV. The disordered stretch occupies residues 19-59; it reads QPCPEPRVEAEPEPPAQPQPQPEPIKEEVPPPPPPPPAPKK. Pro residues-rich tracts occupy residues 31-41 and 48-57; these read EPPAQPQPQPE and PPPPPPPPAP. NAD(+) is bound by residues 72–73, Asp93, and Lys138; that span reads RI. Residues 210-212, Thr241, 270-271, and Arg293 each bind D-glyceraldehyde 3-phosphate; these read SCT and TG. Cys211 acts as the Nucleophile in catalysis. Residue Asn375 participates in NAD(+) binding.

It belongs to the glyceraldehyde-3-phosphate dehydrogenase family. In terms of assembly, homotetramer.

Its subcellular location is the cytoplasm. It catalyses the reaction D-glyceraldehyde 3-phosphate + phosphate + NAD(+) = (2R)-3-phospho-glyceroyl phosphate + NADH + H(+). It participates in carbohydrate degradation; glycolysis; pyruvate from D-glyceraldehyde 3-phosphate: step 1/5. Its function is as follows. May play an important role in regulating the switch between different pathways for energy production during spermiogenesis and in the spermatozoon. Required for sperm motility and male fertility. The chain is Glyceraldehyde-3-phosphate dehydrogenase, testis-specific (GAPDHS) from Bos taurus (Bovine).